Consider the following 1298-residue polypeptide: DNA-directed RNA polymerase subunit beta' (1298 aa).

Residues Cys60, Cys62, Cys75, and Cys78 each coordinate Zn(2+). The Mg(2+) site is built by Asp535, Asp537, and Asp539. Residues Cys877, Cys954, Cys961, and Cys964 each contribute to the Zn(2+) site.

It belongs to the RNA polymerase beta' chain family. The RNAP catalytic core consists of 2 alpha, 1 beta, 1 beta' and 1 omega subunit. When a sigma factor is associated with the core the holoenzyme is formed, which can initiate transcription. Mg(2+) is required as a cofactor. Requires Zn(2+) as cofactor.

The catalysed reaction is RNA(n) + a ribonucleoside 5'-triphosphate = RNA(n+1) + diphosphate. DNA-dependent RNA polymerase catalyzes the transcription of DNA into RNA using the four ribonucleoside triphosphates as substrates. This Micrococcus luteus (strain ATCC 4698 / DSM 20030 / JCM 1464 / CCM 169 / CCUG 5858 / IAM 1056 / NBRC 3333 / NCIMB 9278 / NCTC 2665 / VKM Ac-2230) (Micrococcus lysodeikticus) protein is DNA-directed RNA polymerase subunit beta'.